We begin with the raw amino-acid sequence, 76 residues long: MPSVRSVTCCCLLWMMLSVQLVTPGSPATAQLSGQRTARGPGSAICNMACRLGQGHMYPFCNCNGKRDVVSSSMAV.

An N-terminal signal peptide occupies residues 1 to 27 (MPSVRSVTCCCLLWMMLSVQLVTPGSP). Positions 28–39 (ATAQLSGQRTAR) are excised as a propeptide. Intrachain disulfides connect Cys46–Cys61 and Cys50–Cys63. Asn64 is subject to Asparagine amide. A propeptide spanning residues 65–76 (GKRDVVSSSMAV) is cleaved from the precursor.

This sequence belongs to the conotoxin J superfamily. As to expression, expressed by the venom duct.

The protein localises to the secreted. In terms of biological role, highly inhibits both nicotinic acetylcholine receptors (neuronal (alpha-3/beta-4) and muscular (alpha-1/beta-1/epsilon/delta) subtypes) and the voltage-gated potassium channel Kv1.6/KCNA6 subtype. The protein is Alpha/kappa-conotoxin-like pl14.1 of Conus planorbis (Planorbis cone).